The chain runs to 100 residues: MICOS complex subunit MIC12 (100 aa).

The helical transmembrane segment at 10-26 (FATISSVAAASLYLYAI) threads the bilayer.

The protein belongs to the MICOS complex subunit Mic12 family. As to quaternary structure, component of the mitochondrial contact site and cristae organizing system (MICOS) complex.

The protein localises to the mitochondrion inner membrane. Its function is as follows. Component of the MICOS complex, a large protein complex of the mitochondrial inner membrane that plays crucial roles in the maintenance of crista junctions, inner membrane architecture, and formation of contact sites to the outer membrane. This chain is MICOS complex subunit MIC12 (AIM5), found in Vanderwaltozyma polyspora (strain ATCC 22028 / DSM 70294 / BCRC 21397 / CBS 2163 / NBRC 10782 / NRRL Y-8283 / UCD 57-17) (Kluyveromyces polysporus).